The sequence spans 96 residues: Small ribosomal subunit protein bS6 (96 aa).

Belongs to the bacterial ribosomal protein bS6 family.

Its function is as follows. Binds together with bS18 to 16S ribosomal RNA. The chain is Small ribosomal subunit protein bS6 from Heliobacterium modesticaldum (strain ATCC 51547 / Ice1).